Reading from the N-terminus, the 196-residue chain is ATP-dependent Clp protease proteolytic subunit (196 aa).

Serine 101 serves as the catalytic Nucleophile. The active site involves histidine 126.

This sequence belongs to the peptidase S14 family. In terms of assembly, component of the chloroplastic Clp protease core complex.

The protein localises to the plastid. The protein resides in the chloroplast stroma. It carries out the reaction Hydrolysis of proteins to small peptides in the presence of ATP and magnesium. alpha-casein is the usual test substrate. In the absence of ATP, only oligopeptides shorter than five residues are hydrolyzed (such as succinyl-Leu-Tyr-|-NHMec, and Leu-Tyr-Leu-|-Tyr-Trp, in which cleavage of the -Tyr-|-Leu- and -Tyr-|-Trp bonds also occurs).. Functionally, cleaves peptides in various proteins in a process that requires ATP hydrolysis. Has a chymotrypsin-like activity. Plays a major role in the degradation of misfolded proteins. The chain is ATP-dependent Clp protease proteolytic subunit from Lactuca sativa (Garden lettuce).